Reading from the N-terminus, the 700-residue chain is MPRQTPIERYRNIGISAHIDAGKTTTTERILFYTGVNHKIGEVHDGAATMDWMEQEQERGITITSAATHCMWRGMGGNYPEHRINIIDTPGHVDFTIEVERSMRVLDGACMVYDSVGGVQPQSETVWRQANKYKVPRIAFVNKMDRVGADFFRVERQMRERLKGNPVPVQIPVGAEDHFRGVVDLVKMKAIVWDDASQGVKFEYIDIPEELRATAQEWHDKMVEAAAEADEALLEKYLGGEALTEAEIKGALRRRTIAGEIVPMLCGSAFKNKGVQAMLDAVVDYLPSPIDIPSIQGHGEKDEPLERHANDDEPFSALAFKIMTDPFVGQLIFFRVYSGSVYSGDTVYNPVKEKKERLGRILQMHANQRVEIKDVHAGDIAAAVGLKEATTGDTLCDPDNVIILERMEFPEPVISQAVEPKTKGDQEKMGLALNRLAQEDPSFRVKTDEESGQTIISGMGELHLEILVDRMKREFGVEATVGKPQVAYRETIRKVADDVEGKFIKQSGGRGQYGHAVITLQPNPGKGYEFVDEIKGGVIPREFIPAVDKGIRDTLNAGVLAGYPVVDVKVRLTFGSYHDVDSNENAFRMAGSMAFKDAMRRADPILLEPMMAVEVETPEEYMGNVIGDLSSRRGMVQGTEDIPGGGGKVVHAEVPLAEMFGYSTNLRSLSQGRATYTMEFKHYAEAPRTVSETVISAKRA.

In terms of domain architecture, tr-type G spans 8-290; that stretch reads ERYRNIGISA…AVVDYLPSPI (283 aa). Residues 17–24, 88–92, and 142–145 each bind GTP; these read AHIDAGKT, DTPGH, and NKMD.

Belongs to the TRAFAC class translation factor GTPase superfamily. Classic translation factor GTPase family. EF-G/EF-2 subfamily.

It localises to the cytoplasm. Functionally, catalyzes the GTP-dependent ribosomal translocation step during translation elongation. During this step, the ribosome changes from the pre-translocational (PRE) to the post-translocational (POST) state as the newly formed A-site-bound peptidyl-tRNA and P-site-bound deacylated tRNA move to the P and E sites, respectively. Catalyzes the coordinated movement of the two tRNA molecules, the mRNA and conformational changes in the ribosome. The sequence is that of Elongation factor G 2 (fusB) from Ralstonia nicotianae (strain ATCC BAA-1114 / GMI1000) (Ralstonia solanacearum).